A 298-amino-acid polypeptide reads, in one-letter code: Inosose dehydratase (298 aa).

It belongs to the IolE/MocC family. Glutathione is required as a cofactor. Requires Co(2+) as cofactor. Mn(2+) serves as cofactor.

The enzyme catalyses scyllo-inosose = 3D-3,5/4-trihydroxycyclohexane-1,2-dione + H2O. In terms of biological role, catalyzes the dehydration of inosose (2-keto-myo-inositol, 2KMI or 2,4,6/3,5-pentahydroxycyclohexanone) to 3D-(3,5/4)-trihydroxycyclohexane-1,2-dione (D-2,3-diketo-4-deoxy-epi-inositol). The sequence is that of Inosose dehydratase from Erwinia tasmaniensis (strain DSM 17950 / CFBP 7177 / CIP 109463 / NCPPB 4357 / Et1/99).